A 344-amino-acid polypeptide reads, in one-letter code: Ferrochelatase (344 aa).

2 residues coordinate Fe cation: His214 and Glu295.

This sequence belongs to the ferrochelatase family.

The protein localises to the cytoplasm. It carries out the reaction heme b + 2 H(+) = protoporphyrin IX + Fe(2+). It functions in the pathway porphyrin-containing compound metabolism; protoheme biosynthesis; protoheme from protoporphyrin-IX: step 1/1. Functionally, catalyzes the ferrous insertion into protoporphyrin IX. This chain is Ferrochelatase, found in Rhizobium leguminosarum bv. trifolii (strain WSM2304).